Reading from the N-terminus, the 270-residue chain is Putative pyruvate, phosphate dikinase regulatory protein 2 (270 aa).

ADP is bound at residue 151–158; it reads GVSRTSKT.

The protein belongs to the pyruvate, phosphate/water dikinase regulatory protein family. PDRP subfamily.

It carries out the reaction N(tele)-phospho-L-histidyl/L-threonyl-[pyruvate, phosphate dikinase] + ADP = N(tele)-phospho-L-histidyl/O-phospho-L-threonyl-[pyruvate, phosphate dikinase] + AMP + H(+). The enzyme catalyses N(tele)-phospho-L-histidyl/O-phospho-L-threonyl-[pyruvate, phosphate dikinase] + phosphate + H(+) = N(tele)-phospho-L-histidyl/L-threonyl-[pyruvate, phosphate dikinase] + diphosphate. Bifunctional serine/threonine kinase and phosphorylase involved in the regulation of the pyruvate, phosphate dikinase (PPDK) by catalyzing its phosphorylation/dephosphorylation. This chain is Putative pyruvate, phosphate dikinase regulatory protein 2, found in Listeria monocytogenes serotype 4b (strain F2365).